Here is a 228-residue protein sequence, read N- to C-terminus: ATP-dependent dethiobiotin synthetase BioD (228 aa).

An ATP-binding site is contributed by 12–17; sequence EIGKTT. A Mg(2+)-binding site is contributed by Thr-16. Lys-37 is an active-site residue. Residue Ser-41 coordinates substrate. ATP is bound by residues Asp-54, 116 to 119, and 205 to 207; these read EGAG and PRL. 2 residues coordinate Mg(2+): Asp-54 and Glu-116.

Belongs to the dethiobiotin synthetase family. In terms of assembly, homodimer. Mg(2+) serves as cofactor.

Its subcellular location is the cytoplasm. The catalysed reaction is (7R,8S)-7,8-diammoniononanoate + CO2 + ATP = (4R,5S)-dethiobiotin + ADP + phosphate + 3 H(+). The protein operates within cofactor biosynthesis; biotin biosynthesis; biotin from 7,8-diaminononanoate: step 1/2. Functionally, catalyzes a mechanistically unusual reaction, the ATP-dependent insertion of CO2 between the N7 and N8 nitrogen atoms of 7,8-diaminopelargonic acid (DAPA, also called 7,8-diammoniononanoate) to form a ureido ring. The polypeptide is ATP-dependent dethiobiotin synthetase BioD (Pseudomonas aeruginosa (strain LESB58)).